Here is a 545-residue protein sequence, read N- to C-terminus: CTP synthase (545 aa).

The amidoligase domain stretch occupies residues 1–266 (MTTNYIFVTG…DDYICKRFSL (266 aa)). Residue serine 14 coordinates CTP. Serine 14 is a UTP binding site. ATP is bound by residues 15–20 (SLGKGI) and aspartate 72. Residues aspartate 72 and glutamate 140 each contribute to the Mg(2+) site. Residues 147–149 (DIE), 187–192 (KTKPTQ), and lysine 223 each bind CTP. UTP is bound by residues 187–192 (KTKPTQ) and lysine 223. 239-241 (KDV) contributes to the ATP binding site. A Glutamine amidotransferase type-1 domain is found at 291-542 (TIGMVGKYIE…VKAASEFQKR (252 aa)). Residue glycine 352 participates in L-glutamine binding. The Nucleophile; for glutamine hydrolysis role is filled by cysteine 379. Residues 380 to 383 (LGMQ), glutamate 403, and arginine 470 contribute to the L-glutamine site. Catalysis depends on residues histidine 515 and glutamate 517.

It belongs to the CTP synthase family. In terms of assembly, homotetramer.

The enzyme catalyses UTP + L-glutamine + ATP + H2O = CTP + L-glutamate + ADP + phosphate + 2 H(+). It catalyses the reaction L-glutamine + H2O = L-glutamate + NH4(+). The catalysed reaction is UTP + NH4(+) + ATP = CTP + ADP + phosphate + 2 H(+). It participates in pyrimidine metabolism; CTP biosynthesis via de novo pathway; CTP from UDP: step 2/2. With respect to regulation, allosterically activated by GTP, when glutamine is the substrate; GTP has no effect on the reaction when ammonia is the substrate. The allosteric effector GTP functions by stabilizing the protein conformation that binds the tetrahedral intermediate(s) formed during glutamine hydrolysis. Inhibited by the product CTP, via allosteric rather than competitive inhibition. In terms of biological role, catalyzes the ATP-dependent amination of UTP to CTP with either L-glutamine or ammonia as the source of nitrogen. Regulates intracellular CTP levels through interactions with the four ribonucleotide triphosphates. This chain is CTP synthase, found in Escherichia coli O127:H6 (strain E2348/69 / EPEC).